The primary structure comprises 628 residues: Kelch-like protein diablo (628 aa).

Residues Met-1–His-56 form a disordered region. Positions Pro-14–Asn-29 are enriched in low complexity. The 68-residue stretch at Cys-74 to Glu-141 folds into the BTB domain. Residues Cys-176–Gly-278 enclose the BACK domain. Kelch repeat units lie at residues Val-325–Asp-371, Leu-373–Gly-419, Phe-420–Gly-466, Leu-468–Asn-513, Ile-515–Gly-560, and Gln-561–Ala-607.

It participates in protein modification; protein ubiquitination. Functionally, probable substrate-specific adapter of an E3 ubiquitin-protein ligase complex which mediates the ubiquitination and subsequent proteasomal degradation of target proteins. May have a role in synapse differentiation and growth. The sequence is that of Kelch-like protein diablo from Drosophila pseudoobscura pseudoobscura (Fruit fly).